The chain runs to 294 residues: Pyridoxal 5'-phosphate synthase subunit PdxS (294 aa).

D-ribose 5-phosphate is bound at residue Asp-24. Residue Lys-81 is the Schiff-base intermediate with D-ribose 5-phosphate of the active site. Gly-153 provides a ligand contact to D-ribose 5-phosphate. Residue Arg-165 participates in D-glyceraldehyde 3-phosphate binding. Residues Gly-214 and 235–236 contribute to the D-ribose 5-phosphate site; that span reads GS.

It belongs to the PdxS/SNZ family. As to quaternary structure, in the presence of PdxT, forms a dodecamer of heterodimers.

The enzyme catalyses aldehydo-D-ribose 5-phosphate + D-glyceraldehyde 3-phosphate + L-glutamine = pyridoxal 5'-phosphate + L-glutamate + phosphate + 3 H2O + H(+). Its pathway is cofactor biosynthesis; pyridoxal 5'-phosphate biosynthesis. Its function is as follows. Catalyzes the formation of pyridoxal 5'-phosphate from ribose 5-phosphate (RBP), glyceraldehyde 3-phosphate (G3P) and ammonia. The ammonia is provided by the PdxT subunit. Can also use ribulose 5-phosphate and dihydroxyacetone phosphate as substrates, resulting from enzyme-catalyzed isomerization of RBP and G3P, respectively. In Geobacillus thermodenitrificans (strain NG80-2), this protein is Pyridoxal 5'-phosphate synthase subunit PdxS.